A 467-amino-acid polypeptide reads, in one-letter code: Zinc finger and BTB domain-containing protein 43 (467 aa).

Position 1 is an N-acetylmethionine (M1). Residues C33–A97 form the BTB domain. Disordered regions lie at residues L134–E153 and H162–Y227. The segment covering H140–N149 has biased composition (polar residues). Composition is skewed to basic and acidic residues over residues D164–G174 and K182–Y194. Residues K182, K247, K297, and K358 each participate in a glycyl lysine isopeptide (Lys-Gly) (interchain with G-Cter in SUMO2) cross-link. A C2H2-type 1; atypical zinc finger spans residues Y373–H394. The segment at Y400–H422 adopts a C2H2-type 2 zinc-finger fold. Phosphothreonine is present on T423. Residues Y428–C450 form a C2H2-type 3; atypical zinc finger. K458 is covalently cross-linked (Glycyl lysine isopeptide (Lys-Gly) (interchain with G-Cter in SUMO2)).

It belongs to the krueppel C2H2-type zinc-finger protein family. As to quaternary structure, interacts with BDP1.

The protein resides in the nucleus. Its function is as follows. May be involved in transcriptional regulation. The chain is Zinc finger and BTB domain-containing protein 43 (Zbtb43) from Mus musculus (Mouse).